A 435-amino-acid polypeptide reads, in one-letter code: MLDIRYMRKNSAEVKQRLEYRGVNPETIDELLELDQKRRDLIQKVESLKAQRNDVSDKIAFAKRQKEDASEAILQMKQVGADIKSLDNEQTLLDEQVREIAAHLPNMAAFDVPVGPDESANVEQRKWAPEEYGSRPHALEEASWVKAHYEIGENLGILDFERGAKVSGARFLYYVGDGARLERAVYNFMLDEHRQEGYTEMITPIVVNDSAMFGTGQYPKFQDDAYRVEGLNQTYIPTAEVPLTNYYSGEELPSEDLPIKFTALSPSFRKEAGSAGKDTRGLIRLHQFNKVEMVKFTKPEDSYEELEKMTLDAENILQKLNLPYHVIVLSTGDMGFSAAKTYDIEVWMPQQNVYREISSVSNTEDFQARRMHITYRDADNKLQLVHTLNGSGLAVGRTVAAILENYQNEDGSVTIPEVLRPYLAGQEKLEPTTHH.

Residue 238–240 (TAE) coordinates L-serine. 269–271 (RKE) is a binding site for ATP. Position 292 (Glu292) interacts with L-serine. ATP is bound at residue 356–359 (EISS). Ser391 contacts L-serine.

This sequence belongs to the class-II aminoacyl-tRNA synthetase family. Type-1 seryl-tRNA synthetase subfamily. In terms of assembly, homodimer. The tRNA molecule binds across the dimer.

The protein localises to the cytoplasm. The enzyme catalyses tRNA(Ser) + L-serine + ATP = L-seryl-tRNA(Ser) + AMP + diphosphate + H(+). It carries out the reaction tRNA(Sec) + L-serine + ATP = L-seryl-tRNA(Sec) + AMP + diphosphate + H(+). It participates in aminoacyl-tRNA biosynthesis; selenocysteinyl-tRNA(Sec) biosynthesis; L-seryl-tRNA(Sec) from L-serine and tRNA(Sec): step 1/1. Catalyzes the attachment of serine to tRNA(Ser). Is also able to aminoacylate tRNA(Sec) with serine, to form the misacylated tRNA L-seryl-tRNA(Sec), which will be further converted into selenocysteinyl-tRNA(Sec). This chain is Serine--tRNA ligase, found in Leuconostoc mesenteroides subsp. mesenteroides (strain ATCC 8293 / DSM 20343 / BCRC 11652 / CCM 1803 / JCM 6124 / NCDO 523 / NBRC 100496 / NCIMB 8023 / NCTC 12954 / NRRL B-1118 / 37Y).